A 343-amino-acid polypeptide reads, in one-letter code: MLPEQSLTTPLPATATAAPARRAAVLGVGAALPAHREPSTETERRLGLPPGWIARRTGIRERPLVGPDEATSDLAVRAGAAALAQAELSPERIGLLLLATSTPDHLLPPTAPVVAHRLGLKHAGAVDLAGACSGFLYALALADGYVRLQRTCVLVIGANVLSRRTNPDDPKTSALFADGAGAVVLGPSEGSRGIVACWLGADGSCWDDLYIPAGGSRRPLTPERVARGEHLMYMKDGRALFRRAATGMAEAGRRVLQQAGLDLDDVAWWIPHQANHRLIEEARRQLGMPEARTVNLVDRIGNSSAATIPLALALEAHRFAPGDLLLLTAVGAGLLSAAVLIQW.

Catalysis depends on residues Cys132 and His272. Residues 273-277 (QANHR) are ACP-binding. Asn302 is a catalytic residue.

The protein belongs to the thiolase-like superfamily. BioZ family.

It catalyses the reaction malonyl-[ACP] + an acyl-CoA + H(+) = a 3-oxoacyl-[ACP] + CO2 + CoA. The catalysed reaction is glutaryl-CoA + malonyl-[ACP] + H(+) = 3-oxo-6-carboxyhexanoyl-[ACP] + CO2 + CoA. It participates in cofactor biosynthesis; biotin biosynthesis. In terms of biological role, involved in the formation of the biotin precursor pimeloyl-ACP. Catalyzes the condensation of glutaryl-CoA, an intermediate in lysine degradation, with malonyl-ACP to produce 3-oxopimeloyl-ACP. This chain is 3-oxopimeloyl-[acyl-carrier-protein] synthase, found in Rhodothermus marinus (strain ATCC 43812 / DSM 4252 / R-10) (Rhodothermus obamensis).